We begin with the raw amino-acid sequence, 66 residues long: uncharacterized protein (66 aa).

Helical transmembrane passes span 6-26 (KIIMILGAVLLIIGAVLHFVG) and 39-59 (VTFFFPVVTCIIISVVLSILL).

It localises to the cell membrane. This is an uncharacterized protein from Bacillus subtilis (strain 168).